Consider the following 434-residue polypeptide: Histidinol dehydrogenase (434 aa).

Tyrosine 130, glutamine 191, and asparagine 214 together coordinate NAD(+). Residues serine 237, glutamine 259, and histidine 262 each contribute to the substrate site. Positions 259 and 262 each coordinate Zn(2+). Catalysis depends on proton acceptor residues glutamate 327 and histidine 328. Substrate-binding residues include histidine 328, aspartate 361, glutamate 415, and histidine 420. Aspartate 361 provides a ligand contact to Zn(2+). Histidine 420 contributes to the Zn(2+) binding site.

It belongs to the histidinol dehydrogenase family. Zn(2+) serves as cofactor.

The catalysed reaction is L-histidinol + 2 NAD(+) + H2O = L-histidine + 2 NADH + 3 H(+). Its pathway is amino-acid biosynthesis; L-histidine biosynthesis; L-histidine from 5-phospho-alpha-D-ribose 1-diphosphate: step 9/9. Catalyzes the sequential NAD-dependent oxidations of L-histidinol to L-histidinaldehyde and then to L-histidine. The sequence is that of Histidinol dehydrogenase from Rhizobium meliloti (strain 1021) (Ensifer meliloti).